Reading from the N-terminus, the 339-residue chain is Biotin synthase (339 aa).

The 228-residue stretch at 55–282 (NAVQLSTLLS…KAVVRLSAGR (228 aa)) folds into the Radical SAM core domain. 3 residues coordinate [4Fe-4S] cluster: cysteine 70, cysteine 74, and cysteine 77. The [2Fe-2S] cluster site is built by cysteine 114, cysteine 145, cysteine 205, and arginine 277.

This sequence belongs to the radical SAM superfamily. Biotin synthase family. Homodimer. It depends on [4Fe-4S] cluster as a cofactor. [2Fe-2S] cluster serves as cofactor.

It carries out the reaction (4R,5S)-dethiobiotin + (sulfur carrier)-SH + 2 reduced [2Fe-2S]-[ferredoxin] + 2 S-adenosyl-L-methionine = (sulfur carrier)-H + biotin + 2 5'-deoxyadenosine + 2 L-methionine + 2 oxidized [2Fe-2S]-[ferredoxin]. It participates in cofactor biosynthesis; biotin biosynthesis; biotin from 7,8-diaminononanoate: step 2/2. Its function is as follows. Catalyzes the conversion of dethiobiotin (DTB) to biotin by the insertion of a sulfur atom into dethiobiotin via a radical-based mechanism. This is Biotin synthase from Burkholderia ambifaria (strain ATCC BAA-244 / DSM 16087 / CCUG 44356 / LMG 19182 / AMMD) (Burkholderia cepacia (strain AMMD)).